Consider the following 399-residue polypeptide: MSVMSGDEVQFQGDYDDYITYLKRRIRQLELQVRMLEADKERLERELSRLRSEMSRLRQPPAFAGTVIEVLDEDRAIVQNYNGPRFVVRIAPWIDRKKLRPGTRVALDQRTMAVVEILPTSKDPTVLGFEVIERPNVTYNDIGGLKKQLQELREAIELPLKHPELFEEVGIDPPKGVLLYGPPGCGKTLMAKALAHEVNATFIRVVGSELVRKYIGEGARLVHELFELAKEKAPTIIFIDEIDAIGAKRMDETTGGEREVNRTLMQLLAEMDGFDPRGNVKVIAATNRPDILDPALLRPGRFDRLIEVPLPDFEGRLEILKVHTRRMKLKGVDLRAIAEMTEGASGADLKAIATEAGMFAIRERRTYVTQEDFLKAVDKVLGNERKLLQQITSHEVIYG.

Residues 19–60 adopt a coiled-coil conformation; sequence ITYLKRRIRQLELQVRMLEADKERLERELSRLRSEMSRLRQP. Residues 184–189 and histidine 323 each bind ATP; that span reads GCGKTL. Residues 397–399 form a docks into pockets in the proteasome alpha-ring to cause gate opening region; that stretch reads IYG.

The protein belongs to the AAA ATPase family. Homohexamer. The hexameric complex has a two-ring architecture resembling a top hat that caps the 20S proteasome core at one or both ends. Upon ATP-binding, the C-terminus of PAN interacts with the alpha-rings of the proteasome core by binding to the intersubunit pockets.

It localises to the cytoplasm. ATPase which is responsible for recognizing, binding, unfolding and translocation of substrate proteins into the archaeal 20S proteasome core particle. Is essential for opening the gate of the 20S proteasome via an interaction with its C-terminus, thereby allowing substrate entry and access to the site of proteolysis. Thus, the C-termini of the proteasomal ATPase function like a 'key in a lock' to induce gate opening and therefore regulate proteolysis. Unfolding activity requires energy from ATP hydrolysis, whereas ATP binding alone promotes ATPase-20S proteasome association which triggers gate opening, and supports translocation of unfolded substrates. The sequence is that of Proteasome-activating nucleotidase from Pyrococcus horikoshii (strain ATCC 700860 / DSM 12428 / JCM 9974 / NBRC 100139 / OT-3).